We begin with the raw amino-acid sequence, 360 residues long: Probable cinnamyl alcohol dehydrogenase 6 (360 aa).

Residue Cys48 coordinates Zn(2+). Thr50 lines the NADP(+) pocket. His70, Glu71, Cys101, Cys104, Cys107, Cys115, and Cys164 together coordinate Zn(2+). NADP(+)-binding positions include Thr168, 192–197 (GLGGLG), 215–220 (STSPAK), Thr255, Gly279, and 302–304 (SMT).

This sequence belongs to the zinc-containing alcohol dehydrogenase family. In terms of assembly, homodimer. The cofactor is Zn(2+).

The catalysed reaction is (E)-cinnamyl alcohol + NADP(+) = (E)-cinnamaldehyde + NADPH + H(+). It carries out the reaction (E)-coniferol + NADP(+) = (E)-coniferaldehyde + NADPH + H(+). The enzyme catalyses (E)-sinapyl alcohol + NADP(+) = (E)-sinapaldehyde + NADPH + H(+). It catalyses the reaction (E)-4-coumaroyl alcohol + NADP(+) = (E)-4-coumaraldehyde + NADPH + H(+). The catalysed reaction is (E)-caffeyl alcohol + NADP(+) = (E)-caffeyl aldehyde + NADPH + H(+). It functions in the pathway aromatic compound metabolism; phenylpropanoid biosynthesis. In terms of biological role, involved in lignin biosynthesis. Catalyzes the final step specific for the production of lignin monomers. Catalyzes the NADPH-dependent reduction of coniferaldehyde, 5-hydroxyconiferaldehyde, sinapaldehyde, 4-coumaraldehyde and caffeyl aldehyde to their respective alcohols. This chain is Probable cinnamyl alcohol dehydrogenase 6, found in Oryza sativa subsp. japonica (Rice).